We begin with the raw amino-acid sequence, 214 residues long: tRNA (guanine-N(7)-)-methyltransferase (214 aa).

4 residues coordinate S-adenosyl-L-methionine: E44, D69, D96, and D118. D118 is an active-site residue. Residue K122 coordinates substrate. The segment at 124–129 (KHEKRR) is interaction with RNA. Residues D154 and 191 to 194 (TEYE) contribute to the substrate site.

Belongs to the class I-like SAM-binding methyltransferase superfamily. TrmB family.

The enzyme catalyses guanosine(46) in tRNA + S-adenosyl-L-methionine = N(7)-methylguanosine(46) in tRNA + S-adenosyl-L-homocysteine. It functions in the pathway tRNA modification; N(7)-methylguanine-tRNA biosynthesis. In terms of biological role, catalyzes the formation of N(7)-methylguanine at position 46 (m7G46) in tRNA. The chain is tRNA (guanine-N(7)-)-methyltransferase from Enterococcus faecalis (strain ATCC 700802 / V583).